The primary structure comprises 174 residues: DNA-directed RNA polymerase IV subunit 7 (174 aa).

Belongs to the eukaryotic RPB7/RPC8 RNA polymerase subunit family. As to quaternary structure, component of the RNA polymerase IV complex. Interacts with NRPD1.

Its subcellular location is the nucleus. Its function is as follows. DNA-dependent RNA polymerase catalyzes the transcription of DNA into RNA using the four ribonucleoside triphosphates as substrates. Component of RNA polymerase IV which mediates 24-nt short-interfering RNAs (siRNA) accumulation. Implicated in siRNA-directed heterochromatin formation through the action of DCL3 and AGO4, and subsequent DNA methylation-dependent silencing of targeted sequences. Essential component of a self-reinforcing loop coupling de novo DNA methylation to siRNA production. Required for intercellular but not intracellular RNA interference (RNAi) leading to systemic post-transcriptional gene silencing. Involved in the maintenance of post-transcriptional RNA silencing. This chain is DNA-directed RNA polymerase IV subunit 7 (NRPD7), found in Arabidopsis thaliana (Mouse-ear cress).